Here is a 349-residue protein sequence, read N- to C-terminus: DCD domain-containing protein NRP (349 aa).

Positions 157-201 are disordered; sequence NNNKNKGIDEDHQIQKGGKKNRKNQQNNNNQRNEDDKNNGLDKRF. Over residues 188 to 201 the composition is skewed to basic and acidic residues; the sequence is RNEDDKNNGLDKRF. In terms of domain architecture, DCD spans 214 to 346; sequence ETIGGYIFVC…VLSLLDIFAD (133 aa).

As to quaternary structure, interacts with CRY2 in the cytoplasm. Interacts with Verticillium dahliae PevD1. Interacts with FYPP3. Highly expressed in sensecent leaves, cauline leaves and sepals. Expressed in the shoot apical meristem, leaf veins, central cylinder, root hair zone, root tips, rosette leaves, flowers and siliques.

The protein resides in the cytoplasm. Functionally, contributes to the initial phase of responses to abiotic and biotic stress signals. Binds FYPP3 and facilitates FYPP3 degradation to promote abscisic acid (ABA) response. This chain is DCD domain-containing protein NRP, found in Arabidopsis thaliana (Mouse-ear cress).